Reading from the N-terminus, the 707-residue chain is Keratin, type II cytoskeletal 2 epidermal (707 aa).

Residues 1–20 form a disordered region; the sequence is MSCQISCRSRRGGGGGGGGG. The tract at residues 1 to 198 is head; that stretch reads MSCQISCRSR…DPEIQNVKSQ (198 aa). At Arg-22 the chain carries Asymmetric dimethylarginine. Phosphoserine is present on residues Ser-25 and Ser-28. Low complexity predominate over residues 29–38; sequence AVVSGGSRRS. The disordered stretch occupies residues 29 to 59; sequence AVVSGGSRRSNTSFSCISRHGGGRGGSGGGG. The residue at position 52 (Arg-52) is an Omega-N-methylarginine. Ser-64 carries the phosphoserine modification. Residues 199–234 are coil 1A; sequence EREQIKTLNNKFASFIDKVRFLEQQNQVLRTKWELL. The IF rod domain maps to 199 to 512; the sequence is EREQIKTLNN…KLLEGEECRM (314 aa). The linker 1 stretch occupies residues 235-253; sequence QQLDVGSRTTNLDPIFQAY. Positions 254–345 are coil 1B; that stretch reads IGMLKKQVDR…TLYDAELSQL (92 aa). The segment at 346–369 is linker 12; the sequence is QQDVTDTNVILSMDNNRNLDLDSI. The tract at residues 370–508 is coil 2; it reads IAEVQNQYEM…ATYRKLLEGE (139 aa). Positions 509–707 are tail; sequence ECRMSGDFSD…CGSGVTFSFR (199 aa). The disordered stretch occupies residues 531–707; that stretch reads SSVASKTGFG…CGSGVTFSFR (177 aa). The segment covering 539–700 has biased composition (gly residues); sequence FGSGGQSSGG…GSGSGEGCGS (162 aa). An omega-N-methylarginine mark is found at Arg-555, Arg-593, Arg-607, and Arg-675.

The protein belongs to the intermediate filament family. As to quaternary structure, heterotetramer of two type I and two type II keratins. Associates with KRT10. In terms of tissue distribution, expressed predominantly in the suprabasal layers of the plantar epidermis outside of the footpads (at protein level). Expressed in the suprabasal layers of the interfollicular epidermis of the ear, in the interscale regions distant from the hair follicles in the tail, and in the soles of the footpads (at protein level). Expressed mainly in the middle spinous and granular cells of the epidermis of adult tail, nipple and footsole skin. Also found in ear.

The protein localises to the cytoplasm. In terms of biological role, probably contributes to terminal cornification. Associated with keratinocyte activation, proliferation and keratinization. Required for maintenance of corneocytes and keratin filaments in suprabasal keratinocytes in the epidermis of the ear, potentially via moderation of expression and localization of keratins and their partner proteins. Plays a role in the establishment of the epidermal barrier on plantar skin. The protein is Keratin, type II cytoskeletal 2 epidermal of Mus musculus (Mouse).